The primary structure comprises 162 residues: Larval cuticle protein F1 (162 aa).

Tandem repeats lie at residues 27–30 (AAPV), 43–46 (AAPV), 59–62 (AAPV), and 75–78 (AAPA).

Component of the larval cuticle. This Tenebrio molitor (Yellow mealworm beetle) protein is Larval cuticle protein F1.